We begin with the raw amino-acid sequence, 287 residues long: Pyridoxal 5'-phosphate synthase subunit PdxS (287 aa).

D-ribose 5-phosphate is bound at residue aspartate 21. Lysine 78 acts as the Schiff-base intermediate with D-ribose 5-phosphate in catalysis. Glycine 150 provides a ligand contact to D-ribose 5-phosphate. Arginine 162 contacts D-glyceraldehyde 3-phosphate. D-ribose 5-phosphate contacts are provided by residues glycine 211 and 232 to 233; that span reads GS.

It belongs to the PdxS/SNZ family. In the presence of PdxT, forms a dodecamer of heterodimers.

The catalysed reaction is aldehydo-D-ribose 5-phosphate + D-glyceraldehyde 3-phosphate + L-glutamine = pyridoxal 5'-phosphate + L-glutamate + phosphate + 3 H2O + H(+). It participates in cofactor biosynthesis; pyridoxal 5'-phosphate biosynthesis. Its function is as follows. Catalyzes the formation of pyridoxal 5'-phosphate from ribose 5-phosphate (RBP), glyceraldehyde 3-phosphate (G3P) and ammonia. The ammonia is provided by the PdxT subunit. Can also use ribulose 5-phosphate and dihydroxyacetone phosphate as substrates, resulting from enzyme-catalyzed isomerization of RBP and G3P, respectively. In Tropheryma whipplei (strain Twist) (Whipple's bacillus), this protein is Pyridoxal 5'-phosphate synthase subunit PdxS.